The primary structure comprises 150 residues: Small ribosomal subunit protein uS11z (150 aa).

Phosphoserine is present on serine 19.

It belongs to the universal ribosomal protein uS11 family. Interacts with AAK6.

The protein localises to the cytoplasm. This chain is Small ribosomal subunit protein uS11z (RPS14A), found in Arabidopsis thaliana (Mouse-ear cress).